The sequence spans 326 residues: Serpentine receptor class alpha-12 (326 aa).

The Extracellular portion of the chain corresponds to 1–17; it reads MSCASEVQAQLFTHPVQ. Residues 18–38 form a helical membrane-spanning segment; that stretch reads IIYACVQTVLFLATIIGSLLA. Residues 39-54 lie on the Cytoplasmic side of the membrane; that stretch reads IVQLCKKTTIPDSTKV. A helical membrane pass occupies residues 55-75; it reads LLIGALFFANAHELAYFSSPF. The Extracellular portion of the chain corresponds to 76–101; it reads KVFKMNLFHTNTSCYPLASTLECIPT. The helical transmembrane segment at 102-122 threads the bilayer; the sequence is TTVLAMGISGNMLIQSALSIF. At 123–138 the chain is on the cytoplasmic side; sequence RLLATIFPVCYSRMRA. Residues 139–159 form a helical membrane-spanning segment; that stretch reads LPGVVLLFMVLIPSFLSYSWI. Residues 160–185 lie on the Extracellular side of the membrane; the sequence is RSDIVLDDYQMFCSQWSANISSRANT. A helical membrane pass occupies residues 186–206; sequence YLEYCSYLTVAHIIINALIIL. Over 207–234 the chain is Cytoplasmic; the sequence is RNRSVESKCRFDVQQRYLNSETLKTTQT. Residues 235-255 traverse the membrane as a helical segment; that stretch reads ICYLSIAQFLAMFLYSGGVLF. Over 256 to 270 the chain is Extracellular; the sequence is MRKNQKNIPTLIYIN. A helical membrane pass occupies residues 271-291; sequence VIVWVYAPPYACVSLAPLILF. Residues 292-326 lie on the Cytoplasmic side of the membrane; that stretch reads SLWNLKKQRQIRIQSITVQKETQEDHIRKLQLSWG.

Belongs to the nematode receptor-like protein sra family.

It localises to the membrane. This Caenorhabditis briggsae protein is Serpentine receptor class alpha-12.